The following is a 103-amino-acid chain: Colicin-V (103 aa).

Residues 1-15 (MRTLTLNELDSVSGG) constitute a propeptide that is removed on maturation. C91 and C102 are oxidised to a cystine.

The protein localises to the secreted. Functionally, colicin V kills sensitive cells by disrupting the membrane potential. Its function is as follows. Colicins are polypeptide toxins produced by, and active against E.coli and closely related bacteria. The polypeptide is Colicin-V (cvaC) (Escherichia coli).